Here is a 504-residue protein sequence, read N- to C-terminus: MQQSTPYLSFRGIGKTFPGVKALTDISFDCYAGQVHALMGENGAGKSTLLKILSGNYAPTTGSVVINGQEMSFSDTTAALNAGVAIIYQELHLVPEMTVAENIYLGQLPHKGGIVNRSLLNYEAGLQLKHLGMDIDPDTPLKYLSIGQWQMVEIAKALARNAKIIAFDEPTSSLSAREIDNLFRVIRELRKEGRVILYVSHRMEEIFALSDAITVFKDGRYVKTFTDMQQVDHDALVQAMVGRDIGDIYGWQPRSYGEERLRLDAVKAPGVRTPISLAVRSGEIVGLFGLVGAGRSELMKGMFGGTQITAGQVYIDQQPIDIRKPSHAIAAGMMLCPEDRKAEGIIPVHSVRDNINISARRKHVLGGCVINNGWEENNADHHIRSLNIKTPGAEQLIMNLSGGNQQKAILGRWLSEEMKVILLDEPTRGIDVGAKHEIYNVIYALAAQGVAVLFASSDLPEVLGVADRIVVMREGEIAGELLHEQADERQALSLAMPKVSQAVA.

ABC transporter domains are found at residues 8–243 and 256–499; these read LSFR…MVGR and YGEE…MPKV. 40–47 is an ATP binding site; the sequence is GENGAGKS.

Belongs to the ABC transporter superfamily. Arabinose importer (TC 3.A.1.2.2) family. The complex is composed of two ATP-binding proteins (AraG), two transmembrane proteins (AraH) and a solute-binding protein (AraF).

The protein localises to the cell inner membrane. It carries out the reaction L-arabinose(out) + ATP + H2O = L-arabinose(in) + ADP + phosphate + H(+). Its function is as follows. Part of the ABC transporter complex AraFGH involved in arabinose import. Responsible for energy coupling to the transport system. This chain is Arabinose import ATP-binding protein AraG, found in Escherichia coli O157:H7.